Here is a 501-residue protein sequence, read N- to C-terminus: Lysine--tRNA ligase (501 aa).

Residues E402 and E409 each coordinate Mg(2+).

Belongs to the class-II aminoacyl-tRNA synthetase family. As to quaternary structure, homodimer. Mg(2+) serves as cofactor.

The protein localises to the cytoplasm. The enzyme catalyses tRNA(Lys) + L-lysine + ATP = L-lysyl-tRNA(Lys) + AMP + diphosphate. In Helicobacter pylori (strain G27), this protein is Lysine--tRNA ligase.